We begin with the raw amino-acid sequence, 275 residues long: MTLVSDLALPKPKVHIVIPARFKSTRLPGKPLLEIHGKPMILWVAQKASQATFADDLCIATDDERIAAVCQQAGYEVVMTDAHHASGTDRLSEVAQKKGWDAEDIVVNMQGDEPLVPPQLLEQVKDLLVNKPDCVMATLYELILDYQEFIRPSVVKVVTDNLKHALYFSRAPIPCDRDHAMAMVQQPEGSHQPPLTVPKQAYRHLGIYAYRVKLLQDFVRWSPGILENLESLEQLRVLENGGKIAIEAASVQLPPGVDLQEDLDRLNALPISELQ.

It belongs to the KdsB family.

It is found in the cytoplasm. The catalysed reaction is 3-deoxy-alpha-D-manno-oct-2-ulosonate + CTP = CMP-3-deoxy-beta-D-manno-octulosonate + diphosphate. It participates in nucleotide-sugar biosynthesis; CMP-3-deoxy-D-manno-octulosonate biosynthesis; CMP-3-deoxy-D-manno-octulosonate from 3-deoxy-D-manno-octulosonate and CTP: step 1/1. The protein operates within bacterial outer membrane biogenesis; lipopolysaccharide biosynthesis. Its function is as follows. Activates KDO (a required 8-carbon sugar) for incorporation into bacterial lipopolysaccharide in Gram-negative bacteria. The chain is 3-deoxy-manno-octulosonate cytidylyltransferase from Psychrobacter sp. (strain PRwf-1).